We begin with the raw amino-acid sequence, 137 residues long: Small ribosomal subunit protein uS11 (137 aa).

The disordered stretch occupies residues 116–137 (EDVTPVPSDSTRKKGGRRGRRL). A compositionally biased stretch (basic residues) spans 128–137 (KKGGRRGRRL).

This sequence belongs to the universal ribosomal protein uS11 family.

This is Small ribosomal subunit protein uS11 (RPS14) from Kluyveromyces lactis (strain ATCC 8585 / CBS 2359 / DSM 70799 / NBRC 1267 / NRRL Y-1140 / WM37) (Yeast).